The chain runs to 263 residues: Small ribosomal subunit protein eS4, Y isoform 1 (263 aa).

Residues 42 to 104 (LPLIIFLRNR…TGEHFRLVYD (63 aa)) enclose the S4 RNA-binding domain.

Belongs to the eukaryotic ribosomal protein eS4 family.

In Macaca fuscata fuscata (Japanese macaque), this protein is Small ribosomal subunit protein eS4, Y isoform 1 (RPS4Y1).